The sequence spans 196 residues: ATP-dependent Clp protease proteolytic subunit (196 aa).

The Nucleophile role is filled by S101. The active site involves H126.

The protein belongs to the peptidase S14 family. Component of the chloroplastic Clp protease core complex.

Its subcellular location is the plastid. The protein localises to the chloroplast stroma. The enzyme catalyses Hydrolysis of proteins to small peptides in the presence of ATP and magnesium. alpha-casein is the usual test substrate. In the absence of ATP, only oligopeptides shorter than five residues are hydrolyzed (such as succinyl-Leu-Tyr-|-NHMec, and Leu-Tyr-Leu-|-Tyr-Trp, in which cleavage of the -Tyr-|-Leu- and -Tyr-|-Trp bonds also occurs).. In terms of biological role, cleaves peptides in various proteins in a process that requires ATP hydrolysis. Has a chymotrypsin-like activity. Plays a major role in the degradation of misfolded proteins. This Aethionema cordifolium (Lebanon stonecress) protein is ATP-dependent Clp protease proteolytic subunit.